The chain runs to 321 residues: Homoserine O-succinyltransferase (321 aa).

Catalysis depends on C142, which acts as the Acyl-thioester intermediate. The substrate site is built by K163 and S192. The Proton acceptor role is filled by H235. The active site involves E237. R249 is a substrate binding site.

Belongs to the MetA family.

The protein resides in the cytoplasm. It carries out the reaction L-homoserine + succinyl-CoA = O-succinyl-L-homoserine + CoA. Its pathway is amino-acid biosynthesis; L-methionine biosynthesis via de novo pathway; O-succinyl-L-homoserine from L-homoserine: step 1/1. Transfers a succinyl group from succinyl-CoA to L-homoserine, forming succinyl-L-homoserine. This Shewanella loihica (strain ATCC BAA-1088 / PV-4) protein is Homoserine O-succinyltransferase.